Here is a 268-residue protein sequence, read N- to C-terminus: Sexual development regulator velC (268 aa).

Residues 1–13 (MPHGFDKLLHPEP) are compositionally biased toward basic and acidic residues. Disordered regions lie at residues 1–124 (MPHG…DNFS) and 142–165 (DPDP…NPPH). The segment covering 14–26 (EPQSPSPPPPPRR) has biased composition (pro residues). One can recognise a Velvet domain in the interval 28 to 257 (STQSRYHLHI…ELGFVELKTR (230 aa)). The span at 92–121 (DGNRDREREREHERERERERETDGVARTDD) shows a compositional bias: basic and acidic residues.

This sequence belongs to the velvet family. VelC subfamily. Interacts with velA and vosA.

The protein localises to the nucleus. Velvet-domain-containing protein that acts as a positive regulator of sexual development. This is Sexual development regulator velC from Penicillium rubens (strain ATCC 28089 / DSM 1075 / NRRL 1951 / Wisconsin 54-1255) (Penicillium chrysogenum).